Consider the following 455-residue polypeptide: Tryptophan dimethylallyltransferase (455 aa).

L-tryptophan-binding positions include 79-80 and glutamate 88; that span reads VL. Residues arginine 99, lysine 186, and tyrosine 188 each contribute to the substrate site. Residues tyrosine 190 and arginine 256 each coordinate L-tryptophan. Substrate contacts are provided by arginine 269, lysine 271, tyrosine 273, glutamine 355, tyrosine 357, tyrosine 421, and tyrosine 425.

This sequence belongs to the tryptophan dimethylallyltransferase family. Homodimer.

The catalysed reaction is L-tryptophan + dimethylallyl diphosphate = 4-(3-methylbut-2-enyl)-L-tryptophan + diphosphate. It functions in the pathway alkaloid biosynthesis; ergot alkaloid biosynthesis. Tryptophan dimethylallyltransferase; part of the gene cluster that mediates the biosynthesis of fungal ergot alkaloid. DmaW catalyzes the first step of ergot alkaloid biosynthesis by condensing dimethylallyl diphosphate (DMAP) and tryptophan to form 4-dimethylallyl-L-tryptophan. The second step is catalyzed by the methyltransferase easF that methylates 4-dimethylallyl-L-tryptophan in the presence of S-adenosyl-L-methionine, resulting in the formation of 4-dimethylallyl-L-abrine. The catalase easC and the FAD-dependent oxidoreductase easE then transform 4-dimethylallyl-L-abrine to chanoclavine-I which is further oxidized by easD in the presence of NAD(+), resulting in the formation of chanoclavine-I aldehyde. Agroclavine dehydrogenase easG then mediates the conversion of chanoclavine-I aldehyde to agroclavine via a non-enzymatic adduct reaction: the substrate is an iminium intermediate that is formed spontaneously from chanoclavine-I aldehyde in the presence of glutathione. Further conversion of agroclavine to paspalic acid is a two-step process involving oxidation of agroclavine to elymoclavine and of elymoclavine to paspalic acid, the second step being performed by the elymoclavine oxidase cloA. However, cloA does not encode a functional enzyme indicating that C.fusiformis terminates its ergot alkaloid pathway at elymoclavine. The protein is Tryptophan dimethylallyltransferase of Claviceps fusiformis (Ergot fungus).